A 251-amino-acid chain; its full sequence is MPVHLLIVDALNLIRRIHAVQGTPCVDTCLHALEQLIGNSQPTHAVAVFDDEARAQGWRHQLLPDYKAGRPPMPDDLHQEMPALRDAFTRRGVPCWHVEGNEADDLAATLAVKVAAAGHEATIVSTDKGYCQLLRPEIRIRDYFQKRWLDAPFIESEFGVSPGQLADFWGLAGISSSKIPGVPGIGPKSATQLINDFGTLEALYERLDDVPDKWRKKLEAHRESAFVCRAVATLKTDLQLDGNLQQLRLHG.

A Mg(2+)-binding site is contributed by Asp-104. The 5'-3' exonuclease domain occupies 160-249 (VSPGQLADFW…LDGNLQQLRL (90 aa)). K(+) contacts are provided by Leu-171, Ala-172, Pro-180, Val-182, and Ile-185. Residues 184-189 (GIGPKS) are interaction with DNA.

It belongs to the Xni family. It depends on Mg(2+) as a cofactor. Requires K(+) as cofactor.

In terms of biological role, has flap endonuclease activity. During DNA replication, flap endonucleases cleave the 5'-overhanging flap structure that is generated by displacement synthesis when DNA polymerase encounters the 5'-end of a downstream Okazaki fragment. In Cronobacter sakazakii (strain ATCC BAA-894) (Enterobacter sakazakii), this protein is Flap endonuclease Xni.